The sequence spans 66 residues: MKPLLVVFVFLFLWDPVLAGINSLSSEMHKKCYKNGICRLECYESEMLVAYCMFQLECCVKGNPAP.

The N-terminal stretch at 1–19 (MKPLLVVFVFLFLWDPVLA) is a signal peptide. 3 cysteine pairs are disulfide-bonded: cysteine 32/cysteine 58, cysteine 38/cysteine 52, and cysteine 42/cysteine 59.

The protein belongs to the beta-defensin family.

It is found in the secreted. In terms of biological role, has antibacterial activity. This chain is Beta-defensin 134 (DEFB134), found in Homo sapiens (Human).